A 72-amino-acid polypeptide reads, in one-letter code: Brevinin-2SN4 (72 aa).

The first 22 residues, 1 to 22, serve as a signal peptide directing secretion; that stretch reads MFTMKKPMLLLFFLGMISMSLC. Residues 23 to 40 constitute a propeptide, removed in mature form; the sequence is QDERGADEDDGGEMTEEE. C66 and C72 are oxidised to a cystine.

Belongs to the frog skin active peptide (FSAP) family. Brevinin subfamily. As to expression, expressed by the skin glands.

Its subcellular location is the secreted. Antimicrobial peptide. Active against a variety of Gram-negative and Gram-positive bacterial strains. Not active against fungi. Shows very weak hemolytic activity against human erythrocytes. The chain is Brevinin-2SN4 from Sylvirana spinulosa (Fine-spined frog).